Reading from the N-terminus, the 428-residue chain is MLDIKLFRNEPDYLKGKVKLRGMDPKVVDEVLELDGKRRELIGKAEEMKAERNRVSNEIAEKKRNKEDADDVIAEMRKLGDDIKEVDTELNEVDEKLQYRLSTIPNVMHDDVPEGDSDEENIEVKKWGTPRQFDFEAKAHWDLIEELGMANFDRAARVSGARFVFLTNEGAQLERALMNYMLTKHTTQHGYTEMMVPQLVNANSMYGTGQLPKFEEDLFKVEKEGLYMIPTAEVPLTNYYREEVLSADQLPGKFTAQSACFRSEAGSAGRDTRGLIRLHQFDKVELVRFEKPEDSWDALEQLTSNAEAILEELELPYRRVILCTGDLGFSSSKTYDLEVWLPSYDEYKEISSCSNMTDFQARRANIRFKRDKDAKPELVHTLNGSGLAVGRTFAAIVENYQNADGSITIPEALVPFMGGKTKIGPATK.

L-serine is bound at residue 231–233; the sequence is TAE. ATP is bound at residue 262–264; the sequence is RSE. E285 serves as a coordination point for L-serine. Residue 349-352 participates in ATP binding; it reads EISS. Position 385 (S385) interacts with L-serine.

Belongs to the class-II aminoacyl-tRNA synthetase family. Type-1 seryl-tRNA synthetase subfamily. Homodimer. The tRNA molecule binds across the dimer.

The protein resides in the cytoplasm. It catalyses the reaction tRNA(Ser) + L-serine + ATP = L-seryl-tRNA(Ser) + AMP + diphosphate + H(+). It carries out the reaction tRNA(Sec) + L-serine + ATP = L-seryl-tRNA(Sec) + AMP + diphosphate + H(+). It functions in the pathway aminoacyl-tRNA biosynthesis; selenocysteinyl-tRNA(Sec) biosynthesis; L-seryl-tRNA(Sec) from L-serine and tRNA(Sec): step 1/1. In terms of biological role, catalyzes the attachment of serine to tRNA(Ser). Is also able to aminoacylate tRNA(Sec) with serine, to form the misacylated tRNA L-seryl-tRNA(Sec), which will be further converted into selenocysteinyl-tRNA(Sec). In Staphylococcus carnosus (strain TM300), this protein is Serine--tRNA ligase.